The primary structure comprises 59 residues: Cecropin-C type 1 (59 aa).

The signal sequence occupies residues 1 to 23 (MNFTKIFVLIAMAALLLVGQSEA).

It is found in the secreted. Its function is as follows. Cecropins have lytic and antibacterial activity against several Gram-positive and Gram-negative bacteria. The protein is Cecropin-C type 1 (CECC1) of Aedes albopictus (Asian tiger mosquito).